Here is a 539-residue protein sequence, read N- to C-terminus: Heparanase-like protein 2 (539 aa).

A signal peptide spans Met1 to Gly21. Asn143, Asn163, and Asn181 each carry an N-linked (GlcNAc...) asparagine glycan. The Proton donor role is filled by Glu198. Residue Asn300 is glycosylated (N-linked (GlcNAc...) asparagine). The Nucleophile role is filled by Glu316. Asn421 is a glycosylation site (N-linked (GlcNAc...) asparagine).

Belongs to the glycosyl hydrolase 79 family.

It is found in the lysosome membrane. The protein localises to the secreted. Functionally, endoglycosidase which is a cell surface and extracellular matrix-degrading enzyme. Cleaves heparan sulfate proteoglycans (HSPGs) into heparan sulfate side chains and core proteoglycans. The polypeptide is Heparanase-like protein 2 (Arabidopsis thaliana (Mouse-ear cress)).